Reading from the N-terminus, the 259-residue chain is Small ribosomal subunit protein eS4 (259 aa).

Residues 41–100 (LPLSLFLRNRLKYALNYTEAKKILTQRVVRVDGKVRTCHKFPTGFMDVVAIERTNEYFRM) enclose the S4 RNA-binding domain.

The protein belongs to the eukaryotic ribosomal protein eS4 family.

The protein is Small ribosomal subunit protein eS4 (rps-4) of Caenorhabditis elegans.